The primary structure comprises 366 residues: MLRLLAIETSCDETAVAVVEADAAWPTFAPRQLSSVVASQIDLHAAYGGVVPEVAARRHVETLPFVLESALQQAGLGMAEVDAVAVTCAPGLVGSLLVGLMAAKTLALLYNKPLIGVHHLEGHLFSGFLAAADLRPPCLGLLVSGGHTSLIWMKDYGEYQTMGRTRDDAAGEAFDKVARLLGLGYPGGPQIDRWAQQGDPDRFPLPEGKLDHPYDTSFSGLKTAVLRLVQQLQQEGQELPVADIAASFQACLTRVLTEKAVACAEALGLSTLLVTGGVAANRELRARLLEAGRQKGLRVVIPPPNLCTDNAAMIGAAGLCHWLRGETSPLELGVASRLTLEEIPALYGQGSGGCGQAPTGAAAAVF.

Fe cation-binding residues include H119 and H123. Residues 142-146 (LVSGG), D175, G188, D192, and N281 each bind substrate. D309 contacts Fe cation.

The protein belongs to the KAE1 / TsaD family. The cofactor is Fe(2+).

Its subcellular location is the cytoplasm. It carries out the reaction L-threonylcarbamoyladenylate + adenosine(37) in tRNA = N(6)-L-threonylcarbamoyladenosine(37) in tRNA + AMP + H(+). Required for the formation of a threonylcarbamoyl group on adenosine at position 37 (t(6)A37) in tRNAs that read codons beginning with adenine. Is involved in the transfer of the threonylcarbamoyl moiety of threonylcarbamoyl-AMP (TC-AMP) to the N6 group of A37, together with TsaE and TsaB. TsaD likely plays a direct catalytic role in this reaction. This is tRNA N6-adenosine threonylcarbamoyltransferase from Synechococcus sp. (strain JA-3-3Ab) (Cyanobacteria bacterium Yellowstone A-Prime).